We begin with the raw amino-acid sequence, 74 residues long: uncharacterized protein (74 aa).

This is an uncharacterized protein from Invertebrate iridescent virus 3 (IIV-3).